The sequence spans 212 residues: Protein GET1 (212 aa).

The Lumenal segment spans residues 1–4 (MASL). The chain crosses the membrane as a helical span at residues 5–24 (LLFVLVIQIITYLINTIGAR). Residues 25–110 (TIDSLLWLLY…SFDWTIKTVR (86 aa)) lie on the Cytoplasmic side of the membrane. Residues 75-99 (AKLRRRHDKAMEEYDVKNKKLSALK) adopt a coiled-coil conformation. The helical transmembrane segment at 111-131 (WVSTTGVTVILQFWFSKSPIF) threads the bilayer. Residues 132–155 (DLPRGWLPWQVEWILSFPRAPLGT) lie on the Lumenal side of the membrane. The chain crosses the membrane as a helical span at residues 156–172 (VSIQVWGGACGTVIALV). Topologically, residues 173 to 212 (GGAMGVAAPAFKKINQPRGEAQKMGTPRGSREQTPVRKTQ) are cytoplasmic. Residues 189 to 212 (PRGEAQKMGTPRGSREQTPVRKTQ) form a disordered region. The segment covering 201-212 (GSREQTPVRKTQ) has biased composition (basic and acidic residues).

This sequence belongs to the WRB/GET1 family. Interacts with GET3.

It localises to the endoplasmic reticulum membrane. Its function is as follows. Required for the post-translational delivery of tail-anchored (TA) proteins to the endoplasmic reticulum. Acts as a membrane receptor for soluble GET3, which recognizes and selectively binds the transmembrane domain of TA proteins in the cytosol. This Arthroderma otae (strain ATCC MYA-4605 / CBS 113480) (Microsporum canis) protein is Protein GET1.